A 464-amino-acid chain; its full sequence is DNA primase DnaG (464 aa).

Positions 198-272 (DSIIVVEGRA…DVDYVARAPE (75 aa)) constitute a Toprim domain. The Mg(2+) site is built by E204, D246, and D248. Positions 315 to 333 (RESEGERQPRQVTKPEPEV) are enriched in basic and acidic residues. The interval 315-351 (RESEGERQPRQVTKPEPEVVKAQPKAETPEEKREPAT) is disordered.

Belongs to the archaeal DnaG primase family. As to quaternary structure, forms a ternary complex with MCM helicase and DNA. Component of the archaeal exosome complex. Mg(2+) serves as cofactor.

The catalysed reaction is ssDNA + n NTP = ssDNA/pppN(pN)n-1 hybrid + (n-1) diphosphate.. Functionally, RNA polymerase that catalyzes the synthesis of short RNA molecules used as primers for DNA polymerase during DNA replication. Also part of the exosome, which is a complex involved in RNA degradation. Acts as a poly(A)-binding protein that enhances the interaction between heteromeric, adenine-rich transcripts and the exosome. The polypeptide is DNA primase DnaG (Thermococcus kodakarensis (strain ATCC BAA-918 / JCM 12380 / KOD1) (Pyrococcus kodakaraensis (strain KOD1))).